Reading from the N-terminus, the 368-residue chain is MNERIFRENTRPVQVGNLTIGGSEELTIQSMTTTKTHDVEATVAEIHRLEEAGCQIVRVACPDERAANALSAIKKKIHIPLVADIHFDYRLALKAIDAGVDKIRINPGNIGRRDRVEKVVNAAKAKNIPIRIGVNAGSLEKKIIQKYGYPTADGMVESALAHIKILEDLDFYDIIVSLKASDVNLAIEAYDKASRAFNYPLHLGITESGTQFAGGIKSAAGLGAILSLGIGNTLRVSLSADPVEEIKVAREVLKSFGLSSNAAMLISCPTCGRIEIDLIRIANEVENYIAKIEVPIKVAVLGCAVNGPGEAREADIGIAGSNGEGLLFRHGKIIRKVPEAIMIDELKKEIDILAEEFFVKKIDLESLR.

Residues Cys268, Cys271, Cys303, and Glu310 each coordinate [4Fe-4S] cluster.

This sequence belongs to the IspG family. It depends on [4Fe-4S] cluster as a cofactor.

It carries out the reaction (2E)-4-hydroxy-3-methylbut-2-enyl diphosphate + oxidized [flavodoxin] + H2O + 2 H(+) = 2-C-methyl-D-erythritol 2,4-cyclic diphosphate + reduced [flavodoxin]. It participates in isoprenoid biosynthesis; isopentenyl diphosphate biosynthesis via DXP pathway; isopentenyl diphosphate from 1-deoxy-D-xylulose 5-phosphate: step 5/6. Converts 2C-methyl-D-erythritol 2,4-cyclodiphosphate (ME-2,4cPP) into 1-hydroxy-2-methyl-2-(E)-butenyl 4-diphosphate. In Listeria monocytogenes serovar 1/2a (strain ATCC BAA-679 / EGD-e), this protein is 4-hydroxy-3-methylbut-2-en-1-yl diphosphate synthase (flavodoxin).